The sequence spans 26 residues: AMP deaminase 1 (26 aa).

It belongs to the metallo-dependent hydrolases superfamily. Adenosine and AMP deaminases family. As to quaternary structure, homotetramer. Requires Zn(2+) as cofactor.

It catalyses the reaction AMP + H2O + H(+) = IMP + NH4(+). Its pathway is purine metabolism; IMP biosynthesis via salvage pathway; IMP from AMP: step 1/1. In terms of biological role, AMP deaminase plays a critical role in energy metabolism. In Oryctolagus cuniculus (Rabbit), this protein is AMP deaminase 1 (AMPD1).